The sequence spans 282 residues: Probable iron transport system membrane protein HI_0360 (282 aa).

Transmembrane regions (helical) follow at residues 17–37 (AMIL…YLML), 63–83 (LPYA…ILWI), 93–113 (AVIG…VSLN), 140–160 (IIIG…LLIF), 164–184 (TQAI…FTLL), 186–206 (ACVV…MVVT), 223–243 (IIAI…SYYL), and 245–265 (GATG…AFLF).

Belongs to the ABC-3 integral membrane protein family.

The protein localises to the cell inner membrane. Part of an ATP-driven transport system HI_0359/HI_0360/HI_0361/HI_0362 for iron. The protein is Probable iron transport system membrane protein HI_0360 of Haemophilus influenzae (strain ATCC 51907 / DSM 11121 / KW20 / Rd).